A 495-amino-acid chain; its full sequence is Acetyl-coenzyme A carboxylase carboxyl transferase subunit beta, chloroplastic (495 aa).

A disordered region spans residues 187–208 (ESRNSSENEGSSRRTRTKGSDL). Residues 226-495 (LWVQCENCYG…PLNQKSSKIK (270 aa)) enclose the CoA carboxyltransferase N-terminal domain. Zn(2+) contacts are provided by C230, C233, C249, and C252. Residues 230–252 (CENCYGLNYKKFLKSKMNICEQC) form a C4-type zinc finger.

It belongs to the AccD/PCCB family. Acetyl-CoA carboxylase is a heterohexamer composed of biotin carboxyl carrier protein, biotin carboxylase and 2 subunits each of ACCase subunit alpha and ACCase plastid-coded subunit beta (accD). Zn(2+) serves as cofactor. RNA expressed in leaf, root and stem; the least expression occurs in stems.

It localises to the plastid. Its subcellular location is the chloroplast stroma. It catalyses the reaction N(6)-carboxybiotinyl-L-lysyl-[protein] + acetyl-CoA = N(6)-biotinyl-L-lysyl-[protein] + malonyl-CoA. It functions in the pathway lipid metabolism; malonyl-CoA biosynthesis; malonyl-CoA from acetyl-CoA: step 1/1. Component of the acetyl coenzyme A carboxylase (ACC) complex. Biotin carboxylase (BC) catalyzes the carboxylation of biotin on its carrier protein (BCCP) and then the CO(2) group is transferred by the transcarboxylase to acetyl-CoA to form malonyl-CoA. In Nicotiana tabacum (Common tobacco), this protein is Acetyl-coenzyme A carboxylase carboxyl transferase subunit beta, chloroplastic.